The chain runs to 628 residues: Patulin synthase (628 aa).

The signal sequence occupies residues 1–20 (MRPIPSILGALGAFATLSAA). N-linked (GlcNAc...) asparagine glycosylation occurs at Asn48. FAD is bound by residues 60–61 (TA) and 81–82 (EA). N-linked (GlcNAc...) asparagine glycosylation is present at Asn92. Residue 147-150 (NYMA) participates in FAD binding. Asn197, Asn260, Asn386, Asn429, and Asn486 each carry an N-linked (GlcNAc...) asparagine glycan. His564 functions as the Proton acceptor in the catalytic mechanism. FAD-binding positions include Ala598 and 609–610 (PQ).

The protein belongs to the GMC oxidoreductase family. As to quaternary structure, homodimer. Requires FAD as cofactor.

The protein resides in the cytoplasm. It is found in the cell cortex. Its subcellular location is the vacuole. The protein localises to the secreted. It localises to the cell wall. The catalysed reaction is (E)-ascladiol + A = patulin + AH2. Its pathway is mycotoxin biosynthesis; patulin biosynthesis. Its function is as follows. Patulin synthase; part of the gene cluster that mediates the biosynthesis of patulin, an acetate-derived tetraketide mycotoxin produced by several fungal species that shows antimicrobial properties against several bacteria. PatE catalyzes the last step of the pathway which is the conversion of E-ascladiol to patulin. The pathway begins with the synthesis of 6-methylsalicylic acid by the polyketide synthase (PKS) patK via condensation of acetate and malonate units. The 6-methylsalicylic acid decarboxylase patG then catalyzes the decarboxylation of 6-methylsalicylic acid to yield m-cresol (also known as 3-methylphenol). These first reactions occur in the cytosol. The intermediate m-cresol is then transported into the endoplasmic reticulum where the cytochrome P450 monooxygenase patH converts it to m-hydroxybenzyl alcohol, which is further converted to gentisyl alcohol by the cytochrome P450 monooxygenase patI. The oxidoreductases patJ and patO further convert gentisyl alcohol to isoepoxydon in the vacuole. PatN catalyzes then the transformation of isoepoxydon into phyllostine. The cluster protein patF is responsible for the conversion from phyllostine to neopatulin whereas the alcohol dehydrogenase patD converts neopatulin to E-ascladiol. The steps between isoepoxydon and E-ascladiol occur in the cytosol, and E-ascladiol is probably secreted to the extracellular space by one of the cluster-specific transporters patC or patM. Finally, the secreted patulin synthase patE catalyzes the conversion of E-ascladiol to patulin. The polypeptide is Patulin synthase (Aspergillus clavatus (strain ATCC 1007 / CBS 513.65 / DSM 816 / NCTC 3887 / NRRL 1 / QM 1276 / 107)).